A 291-amino-acid chain; its full sequence is MKRIVLFLATNLAIVLVLSLTMRLLGVEPYLTANGLNLTSLLIFAAVMGFGGSLISLAISKWMAKKSMGVQVIETPANSTEFWLVETVRKYADDAGIGMPEVGIFPSPEVNAFATGMNKNNALVAVSAGLLSTMTRAEAEAVIGHEVAHVANGDMVTLALIQGVVNTFVMFLSRIIGHTVDRVVFKNEEGHGPAFFVTMIVAELVLGILASIIVMWFSRQREFRADRGGASLAGKGAMIAALERLRSLHPHPLPDKMAAFGIAGGGAAGLKRLFMTHPPLEERIAALRAVQ.

The next 2 helical transmembrane spans lie at I4–L24 and T39–I59. A Zn(2+)-binding site is contributed by H145. E146 is a catalytic residue. H149 serves as a coordination point for Zn(2+). 2 consecutive transmembrane segments (helical) span residues V156–I176 and F195–M215. E222 lines the Zn(2+) pocket.

It belongs to the peptidase M48B family. Requires Zn(2+) as cofactor.

It is found in the cell inner membrane. This Thiobacillus denitrificans (strain ATCC 25259 / T1) protein is Protease HtpX homolog.